The sequence spans 242 residues: uncharacterized protein (242 aa).

The 69-residue stretch at 8 to 76 (TPLYIQLKQI…QGKGTFVKSP (69 aa)) folds into the HTH gntR-type domain. Positions 36–55 (ENELCTKYNVSRITVRKAIL) form a DNA-binding region, H-T-H motif.

This is an uncharacterized protein from Bacillus subtilis (strain 168).